Consider the following 49-residue polypeptide: Large ribosomal subunit protein bL33 (49 aa).

Belongs to the bacterial ribosomal protein bL33 family.

The polypeptide is Large ribosomal subunit protein bL33 (Lactobacillus acidophilus (strain ATCC 700396 / NCK56 / N2 / NCFM)).